Here is a 396-residue protein sequence, read N- to C-terminus: NAD(P)H oxidoreductase RTN4IP1, mitochondrial (396 aa).

The transit peptide at 1-40 (MEFLKTCVLRRNACTAVCFWRSKVVQKPSVRRISTTSPRS) directs the protein to the mitochondrion. The Enoyl reductase (ER) domain maps to 52–393 (GKNEVLRFTQ…RGHARGKTVI (342 aa)). Residues S214, G216, V217, S237, Y255, N276, L300, A341, F343, H386, A387, and R388 each coordinate NADPH.

This sequence belongs to the zinc-containing alcohol dehydrogenase family. Quinone oxidoreductase subfamily. In terms of assembly, interacts with RTN4, UQCRC1 and UQCRC2. Widely expressed in mitochondria-enriched tissues. Found in heart, muscle, kidney, liver, brain and placenta.

The protein resides in the mitochondrion matrix. It localises to the mitochondrion outer membrane. The catalysed reaction is a 3-demethylubiquinone + NADH + 2 H(+) = a 3-demethylubiquinol + NAD(+). The enzyme catalyses a 3-demethylubiquinone + NADPH + 2 H(+) = a 3-demethylubiquinol + NADP(+). It carries out the reaction 3-demethylubiquinone-10 + NADH + 2 H(+) = 3-demethylubiquinol-10 + NAD(+). It catalyses the reaction 3-demethylubiquinone-10 + NADPH + 2 H(+) = 3-demethylubiquinol-10 + NADP(+). It functions in the pathway cofactor biosynthesis; ubiquinone biosynthesis. In terms of biological role, NAD(P)H oxidoreductase involved in the ubiquinone biosynthetic pathway. Required for the O-methyltransferase activity of COQ3. Able to catalyze the oxidoreduction of 3-demethylubiquinone into 3-demethylubiquinol in vitro. However, it is unclear if 3-demethylubiquinone constitutes a substrate in vivo. May also play a role in the regulation of retinal ganglion cell (RGC) neurite outgrowth, and hence in the development of the inner retina and optic nerve. Appears to be a potent inhibitor of regeneration following spinal cord injury. This chain is NAD(P)H oxidoreductase RTN4IP1, mitochondrial, found in Homo sapiens (Human).